We begin with the raw amino-acid sequence, 138 residues long: Large ribosomal subunit protein uL16 (138 aa).

Positions 1–17 (MLQPKRTKFRKQHKGRN) are enriched in basic residues. Residues 1–22 (MLQPKRTKFRKQHKGRNRGVAT) are disordered.

This sequence belongs to the universal ribosomal protein uL16 family. In terms of assembly, part of the 50S ribosomal subunit.

Binds 23S rRNA and is also seen to make contacts with the A and possibly P site tRNAs. The polypeptide is Large ribosomal subunit protein uL16 (Acidithiobacillus ferrooxidans (strain ATCC 23270 / DSM 14882 / CIP 104768 / NCIMB 8455) (Ferrobacillus ferrooxidans (strain ATCC 23270))).